The following is a 1038-amino-acid chain: Bone morphogenetic protein receptor type-2 (1038 aa).

Positions 1–26 (MTSSLQRPWRVPWLPWTILLVSTAAA) are cleaved as a signal peptide. Over 27–150 (SQNQERLCAF…PPHSFNRDET (124 aa)) the chain is Extracellular. Intrachain disulfides connect C34-C66, C60-C84, C94-C117, C99-C116, and C118-C123. N55 carries an N-linked (GlcNAc...) asparagine glycan. N-linked (GlcNAc...) asparagine glycosylation is present at N110. Residue N126 is glycosylated (N-linked (GlcNAc...) asparagine). Residues 151 to 171 (IIIALASVSVLAVLIVALCFG) form a helical membrane-spanning segment. Residues 172–1038 (YRMLTGDRKQ…VSKDIGMNCL (867 aa)) are Cytoplasmic-facing. A Protein kinase domain is found at 203-504 (LKLLELIGRG…QCAEERMAEL (302 aa)). Residues 209-217 (IGRGRYGAV), K230, and 280-282 (EYY) contribute to the ATP site. D333 (proton acceptor) is an active-site residue. ATP is bound by residues 337-338 (RN) and D351. T379 carries the phosphothreonine modification. S586 carries the phosphoserine modification. Residues 593–626 (QAQARIPSPETSVTSLSTNTTTTNTTGLTPSTGM) form a disordered region. Over residues 603-626 (TSVTSLSTNTTTTNTTGLTPSTGM) the composition is skewed to low complexity. A phosphoserine mark is found at S680 and S681. 2 disordered regions span residues 746-770 (PKQQNLPKRPTSLPLNTKNSTKEPR) and 872-972 (RREQ…EKIK). A compositionally biased stretch (basic and acidic residues) spans 872–896 (RREQQAGHDEGVLDRLVDRRERPLE). Polar residues predominate over residues 937–964 (RPNSLDLSATNVLDGSSIQIGESTQDGK).

It belongs to the protein kinase superfamily. TKL Ser/Thr protein kinase family. TGFB receptor subfamily. In terms of assembly, interacts with GDF5. Interacts with BMP4. Interacts with SCUBE3. Interacts with TSC22D1/TSC-22. Interacts with activin A/INHBA. It depends on Mg(2+) as a cofactor. Mn(2+) is required as a cofactor. In terms of tissue distribution, highly expressed in heart and liver.

The protein resides in the cell membrane. It catalyses the reaction L-threonyl-[receptor-protein] + ATP = O-phospho-L-threonyl-[receptor-protein] + ADP + H(+). The catalysed reaction is L-seryl-[receptor-protein] + ATP = O-phospho-L-seryl-[receptor-protein] + ADP + H(+). Its function is as follows. On ligand binding, forms a receptor complex consisting of two type II and two type I transmembrane serine/threonine kinases. Type II receptors phosphorylate and activate type I receptors which autophosphorylate, then bind and activate SMAD transcriptional regulators. Can also mediate signaling through the activation of the p38MAPK cascade. Binds to BMP7, BMP2 and, less efficiently, BMP4. Binding is weak but enhanced by the presence of type I receptors for BMPs. Mediates induction of adipogenesis by GDF6. Promotes signaling also by binding to activin A/INHBA. The sequence is that of Bone morphogenetic protein receptor type-2 (BMPR2) from Homo sapiens (Human).